We begin with the raw amino-acid sequence, 831 residues long: MLTIQFLCPLPNGLHARPAWELKEQCSQWQSEITFINHRQNAKADAKSSLALIGTGTLFNDSCSLNISGSDEEQARRVLEEYIQVRFIDSDSVQPTQAELTAHPLPRSLSRLNPDLLYGNVLASGVGVGTLTLLQSDSLDSYRAIPASAQDSTRLEHSLATLAEQLNQQLRERDGESKTILSAHLSLIQDDEFAGNIRRLMTEQHQGLGAAIISNMEQVCAKLSASASDYLRERVSDIRDISEQLLHITWPELKPRNKLVLEKPTILVAEDLTPSQFLSLDLKNLAGMILEKTGRTSHTLILARASAIPVLSGLPLDAIARYAGQPAVLDAQCGVLAINPNDAVSGYYQVAQTLADKRQKQQAQAAAQLAYSRDNKRIDIAANIGTALEAPGAFANGAEGVGLFRTEMLYMDRDSAPDEQEQFEAYQQVLLAAGDKPIIFRTMDIGGDKSIPYLNIPQEENPFLGYRAVRIYPEFAGLFRTQLRAILRAASFGNAQLMIPMVHSLDQILWVKGEIQKAIVELKRDGLRHAETITLGIMVEVPSVCYIIDHFCDEVDFFSIGSNDMTQYLYAVDRNNPRVSPLYNPITPSFLRMLQQIVTTAHQRGKWVGICGELGGESRYLPLLLGLGLDELSMSSPRIPAVKSQLRQLDSEACRELARQACECRSAQEIEALLTAFTPEEDVRPLLALENIFVDQDFSNKEQAIQFLCGNLGVNGRTEHPFELEEDVWQREEIVTTGVGFGVAIPHTKSQWIRHSSISIARLAKPIGWQSEMGEVELVIMLTLGANEGMNHVKVFSQLARKLVNKNFRQSLFAAQDAQSILTLLETELTF.

Residues 1–90 (MLTIQFLCPL…EYIQVRFIDS (90 aa)) form the HPr domain. His15 (pros-phosphohistidine intermediate; for HPr activity) is an active-site residue. His15 is modified (phosphohistidine; by EI). The segment at 119–650 (GNVLASGVGV…AVKSQLRQLD (532 aa)) is PTS EI. The active-site Tele-phosphohistidine intermediate; for PTS EI activity is His298. The residue at position 298 (His298) is a Phosphohistidine; by autocatalysis. Residues Arg405 and Arg441 each coordinate phosphoenolpyruvate. Glu540 and Asp564 together coordinate Mg(2+). Phosphoenolpyruvate is bound by residues 563–564 (ND) and Arg574. Cys611 acts as the Proton donor; for EI activity in catalysis. In terms of domain architecture, PTS EIIA type-2 spans 685–828 (PLLALENIFV…QSILTLLETE (144 aa)). His747 acts as the Tele-phosphohistidine intermediate; for PTS EIIA activity in catalysis. His747 bears the Phosphohistidine; by HPr mark.

It belongs to the PEP-utilizing enzyme family. The cofactor is Mg(2+).

The protein resides in the cytoplasm. The enzyme catalyses L-histidyl-[protein] + phosphoenolpyruvate = N(pros)-phospho-L-histidyl-[protein] + pyruvate. It carries out the reaction D-fructose(out) + N(pros)-phospho-L-histidyl-[protein] = D-fructose 1-phosphate(in) + L-histidyl-[protein]. Functionally, multifunctional protein that includes general (non sugar-specific) and sugar-specific components of the phosphoenolpyruvate-dependent sugar phosphotransferase system (sugar PTS). This major carbohydrate active transport system catalyzes the phosphorylation of incoming sugar substrates concomitantly with their translocation across the cell membrane. The enzyme II FryABC PTS system is involved in fructose transport. This is Multiphosphoryl transfer protein 1 (fryA) from Escherichia coli (strain K12).